The following is a 72-amino-acid chain: Large ribosomal subunit protein bL31 (72 aa).

4 residues coordinate Zn(2+): Cys16, Cys18, Cys37, and Cys40.

It belongs to the bacterial ribosomal protein bL31 family. Type A subfamily. Part of the 50S ribosomal subunit. Zn(2+) is required as a cofactor.

Functionally, binds the 23S rRNA. The chain is Large ribosomal subunit protein bL31 from Buchnera aphidicola subsp. Acyrthosiphon pisum (strain APS) (Acyrthosiphon pisum symbiotic bacterium).